A 416-amino-acid polypeptide reads, in one-letter code: CinA-like protein (416 aa).

The protein belongs to the CinA family.

This is CinA-like protein from Rippkaea orientalis (strain PCC 8801 / RF-1) (Cyanothece sp. (strain PCC 8801)).